We begin with the raw amino-acid sequence, 433 residues long: tRNA-queuosine alpha-mannosyltransferase (433 aa).

Residues 194 to 244 (PAAKSHIQTSSPSSYPDVEPPEKMLNVAGTNQSHEPTSVTPHQETASPLCG) form a disordered region. Positions 221 to 239 (AGTNQSHEPTSVTPHQETA) are enriched in polar residues.

It belongs to the glycosyltransferase group 1 family. Glycosyltransferase 4 subfamily.

The protein localises to the cytoplasm. Its subcellular location is the nucleus. The catalysed reaction is queuosine(34) in tRNA(Asp) + GDP-alpha-D-mannose = O-4''-alpha-D-mannosylqueuosine(34) in tRNA(Asp) + GDP + H(+). In terms of biological role, glycosyltransferase that specifically catalyzes mannosylation of cytoplasmic tRNA(Asp) modified with queuosine at position 34 (queuosine(34)). Mannosylates the cyclopentene moiety of queuosine(34) in tRNA(Asp) to form mannosyl-queuosine(34). Mannosylation of queuosine(34) in tRNA(Asp) is required to slow-down elongation at cognate codons, GAC and GAU, thereby regulating protein translation. This Danio rerio (Zebrafish) protein is tRNA-queuosine alpha-mannosyltransferase (gtdc1).